Here is a 235-residue protein sequence, read N- to C-terminus: Sperm-associated microtubule inner protein 5 (235 aa).

In terms of assembly, microtubule inner protein component of sperm flagellar doublet microtubules. As to expression, expressed in sperm.

It localises to the cytoplasm. It is found in the cytoskeleton. The protein resides in the flagellum axoneme. Its subcellular location is the nucleus. Microtubule inner protein (MIP) part of the dynein-decorated doublet microtubules (DMTs) in flagellum axoneme. May serve to reinforce and thus stabilize the microtubule structure in the sperm flagella. The chain is Sperm-associated microtubule inner protein 5 (SPMIP5) from Bos taurus (Bovine).